Reading from the N-terminus, the 20-residue chain is Brevinin-1DYc (20 aa).

C14 and C20 form a disulfide bridge.

As to expression, expressed by the skin glands.

Its subcellular location is the secreted. Antimicrobial peptide. Has low activity against the Gram-positive bacterium S.aureus and the Gram-negative bacterium E.coli (MIC&lt;15 uM). Has a strong hemolytic activity. This is Brevinin-1DYc from Rana dybowskii (Dybovsky's frog).